Here is a 689-residue protein sequence, read N- to C-terminus: SH3 domain-binding protein 1 (689 aa).

Positions 1–11 (MMKRQLHRMRQ) are enriched in basic residues. The interval 1-24 (MMKRQLHRMRQLAHTGSSGRTPET) is disordered. Positions 1–275 (MMKRQLHRMR…TAAPFSRVYG (275 aa)) are interaction with CGNL1. The region spanning 17-262 (SSGRTPETAE…RDNHSQADSS (246 aa)) is the BAR domain. Serine 241 and serine 262 each carry phosphoserine. Residues 276-469 (VSLRTHLQDL…VLIQNADTLF (194 aa)) form the Rho-GAP domain. The tract at residues 470–689 (PGDINFSVSG…RPRGLISETD (220 aa)) is interaction with CD2AP. A disordered region spans residues 507-689 (TAATPTPTPA…RPRGLISETD (183 aa)). Phosphoserine occurs at positions 539 and 545. Residues 565–575 (PARPTMPPPQP) show a composition bias toward pro residues. Positions 576-594 (SSSRSSPPALSLPAGSVSP) are enriched in low complexity. At serine 586 the chain carries Phosphoserine. Threonine 596 carries the post-translational modification Phosphothreonine. Positions 611–620 (APTVPPPLPP) match the SH3-binding motif. A compositionally biased stretch (pro residues) spans 613 to 625 (TVPPPLPPAPPQP). Serine 641 bears the Phosphoserine mark. The segment covering 670-680 (PPTPVLPPQPR) has biased composition (pro residues).

Interacts with RAC1. Interacts with the exocyst via EXOC4 and EXOC8; required for the localization of both SH3BP1 and the exocyst to the leading edge of migrating cells. Interacts with CD2AP and CGNL1; probably part of a complex at cell junctions. Interacts with CAPZA1; recruits CAPZA1 to forming cell junctions. May interact with AFDN. Interacts with PLXND1; they dissociate upon SEMA3E binding to PLXND1 allowing SH3BP1 to transduce downstream signal through RAC1 inactivation. Interacts with ABL1, GRB2 and SRC (via SH3 domain).

The protein localises to the cell projection. It localises to the cell junction. Its subcellular location is the tight junction. The protein resides in the adherens junction. It is found in the phagocytic cup. The protein localises to the nucleus. It localises to the cytoplasm. Its subcellular location is the cytosol. Functionally, GTPase activating protein/GAP which specifically converts GTP-bound Rho-type GTPases including RAC1 and CDC42 in their inactive GDP-bound form. By specifically inactivating RAC1 at the leading edge of migrating cells, it regulates the spatiotemporal organization of cell protrusions which is important for proper cell migration. Also negatively regulates CDC42 in the process of actin remodeling and the formation of epithelial cell junctions. Through its GAP activity toward RAC1 and/or CDC42 plays a specific role in phagocytosis of large particles. Specifically recruited by a PI3 kinase/PI3K-dependent mechanism to sites of large particles engagement, inactivates RAC1 and/or CDC42 allowing the reorganization of the underlying actin cytoskeleton required for engulfment. It also plays a role in angiogenesis and the process of repulsive guidance as part of a semaphorin-plexin signaling pathway. Following the binding of PLXND1 to extracellular SEMA3E it dissociates from PLXND1 and inactivates RAC1, inducing the intracellular reorganization of the actin cytoskeleton and the collapse of cells. This chain is SH3 domain-binding protein 1, found in Rattus norvegicus (Rat).